The following is a 792-amino-acid chain: Protocadherin beta-18 (792 aa).

Positions Met-1–Ala-26 are cleaved as a signal peptide. 6 Cadherin domains span residues Gly-27–Phe-133, Gln-134–Phe-242, Pro-243–Leu-347, Ile-348–Phe-451, Asn-452–Val-561, and Ala-568–Val-676. N-linked (GlcNAc...) asparagine glycosylation is present at Asn-169. 2 N-linked (GlcNAc...) asparagine glycosylation sites follow: Asn-418 and Asn-452. A helical membrane pass occupies residues Val-693–Val-713.

It localises to the cell membrane. Potential calcium-dependent cell-adhesion protein. This chain is Protocadherin beta-18 (Pcdhb18), found in Mus musculus (Mouse).